We begin with the raw amino-acid sequence, 299 residues long: Oxygen-dependent coproporphyrinogen-III oxidase (299 aa).

Ser92 provides a ligand contact to substrate. Mn(2+)-binding residues include His96 and His106. The Proton donor role is filled by His106. Residue 108 to 110 (NVR) coordinates substrate. Mn(2+) is bound by residues His145 and His175. An important for dimerization region spans residues 240–275 (YVEFNLVWDRGTLFGLQTGGRTESILMSMPPLVRWE). 258 to 260 (GGR) contacts substrate.

It belongs to the aerobic coproporphyrinogen-III oxidase family. As to quaternary structure, homodimer. Requires Mn(2+) as cofactor.

The protein resides in the cytoplasm. It carries out the reaction coproporphyrinogen III + O2 + 2 H(+) = protoporphyrinogen IX + 2 CO2 + 2 H2O. Its pathway is porphyrin-containing compound metabolism; protoporphyrin-IX biosynthesis; protoporphyrinogen-IX from coproporphyrinogen-III (O2 route): step 1/1. Its function is as follows. Involved in the heme biosynthesis. Catalyzes the aerobic oxidative decarboxylation of propionate groups of rings A and B of coproporphyrinogen-III to yield the vinyl groups in protoporphyrinogen-IX. This is Oxygen-dependent coproporphyrinogen-III oxidase from Escherichia coli O17:K52:H18 (strain UMN026 / ExPEC).